A 344-amino-acid chain; its full sequence is MFPAVNEIKVQTWRRDQRGECPRRSAQCRLFSCAHRECAPAARSLENRGPENRTARPEATMSGDVLCNGHSAFHRLLKHSSSRTHEALVVKIIQENKNTPLFCTAPEPRRDSGVNGEFLLNSAELQDEQTLPLHCIHSAADITSSKHRKPARRKVKRSTKRAAESKSPANRKVTDYFPIRRSSRKSKSELKYEEKQHIDTLISNGIEDGMMVRFIEGKGRGVFATQPFQKGQYVVEYHGDLLQITDAKQREALYAQDPSTGCYMYYFQYLSKTYCVDATKESDRLGRLINHSKNGNCQTKLHAIAGKPHLILVASRDIQEGEELLYDYGDRSKSSIEAHPWLKH.

The tract at residues 143–176 (TSSKHRKPARRKVKRSTKRAAESKSPANRKVTDY) is disordered. A compositionally biased stretch (basic residues) spans 145–160 (SKHRKPARRKVKRSTK). Residues 208–329 (DGMMVRFIEG…EGEELLYDYG (122 aa)) enclose the SET domain. S-adenosyl-L-methionine is bound by residues 218-220 (KGR), Y263, and 290-291 (NH).

The protein belongs to the class V-like SAM-binding methyltransferase superfamily. Histone-lysine methyltransferase family. PR/SET subfamily.

It localises to the nucleus. It is found in the chromosome. It catalyses the reaction L-lysyl(20)-[histone H4] + S-adenosyl-L-methionine = N(6)-methyl-L-lysyl(20)-[histone H4] + S-adenosyl-L-homocysteine + H(+). The catalysed reaction is L-lysyl-[protein] + S-adenosyl-L-methionine = N(6)-methyl-L-lysyl-[protein] + S-adenosyl-L-homocysteine + H(+). Its function is as follows. Protein-lysine N-methyltransferase that monomethylates both histones and non-histone proteins. Specifically monomethylates 'Lys-20' of histone H4 (H4K20me1). H4K20me1 is enriched during mitosis and represents a specific tag for epigenetic transcriptional repression. Mainly functions in euchromatin regions, thereby playing a central role in the silencing of euchromatic genes. Required for cell proliferation, probably by contributing to the maintenance of proper higher-order structure of DNA during mitosis. Involved in chromosome condensation and proper cytokinesis. This is N-lysine methyltransferase KMT5A-A from Danio rerio (Zebrafish).